A 247-amino-acid chain; its full sequence is Ubiquinone biosynthesis O-methyltransferase (247 aa).

The S-adenosyl-L-methionine site is built by R40, G71, D92, and M135.

This sequence belongs to the methyltransferase superfamily. UbiG/COQ3 family.

It carries out the reaction a 3-demethylubiquinol + S-adenosyl-L-methionine = a ubiquinol + S-adenosyl-L-homocysteine + H(+). It catalyses the reaction a 3-(all-trans-polyprenyl)benzene-1,2-diol + S-adenosyl-L-methionine = a 2-methoxy-6-(all-trans-polyprenyl)phenol + S-adenosyl-L-homocysteine + H(+). It functions in the pathway cofactor biosynthesis; ubiquinone biosynthesis. Its function is as follows. O-methyltransferase that catalyzes the 2 O-methylation steps in the ubiquinone biosynthetic pathway. In Ruegeria sp. (strain TM1040) (Silicibacter sp.), this protein is Ubiquinone biosynthesis O-methyltransferase.